A 614-amino-acid chain; its full sequence is Type VII secretion system protein EssD (614 aa).

The tract at residues 417–445 (QNHVTHGPKDSMVRSEGKHSISSHEMNSS) is disordered. The segment covering 423 to 435 (GPKDSMVRSEGKH) has biased composition (basic and acidic residues).

This sequence belongs to the EssD family. Interacts (via C-terminal) with EssG; this interaction blocks EssD activity. Interacts with EssE.

It localises to the secreted. Its subcellular location is the cell membrane. In terms of biological role, component of the type VII secretion system (Ess). Plays a role in Ess secretion during infection. Required for the efficient secretion of EsxA. Required for abscess formation and staphylococcal persistence in host tissues. Possesses a toxic DNase activity that is modulated by EsaG by forming a nuclease toxin-antitoxin pair. This nuclease toxin targets competitor bacteria. The protein is Type VII secretion system protein EssD of Staphylococcus aureus (strain USA300).